Reading from the N-terminus, the 128-residue chain is Small ribosomal subunit protein uS12 (128 aa).

The residue at position 89 (Asp89) is a 3-methylthioaspartic acid.

The protein belongs to the universal ribosomal protein uS12 family. As to quaternary structure, part of the 30S ribosomal subunit. Contacts proteins S8 and S17. May interact with IF1 in the 30S initiation complex.

Functionally, with S4 and S5 plays an important role in translational accuracy. Interacts with and stabilizes bases of the 16S rRNA that are involved in tRNA selection in the A site and with the mRNA backbone. Located at the interface of the 30S and 50S subunits, it traverses the body of the 30S subunit contacting proteins on the other side and probably holding the rRNA structure together. The combined cluster of proteins S8, S12 and S17 appears to hold together the shoulder and platform of the 30S subunit. In Campylobacter jejuni subsp. jejuni serotype O:6 (strain 81116 / NCTC 11828), this protein is Small ribosomal subunit protein uS12.